The sequence spans 342 residues: Succinylglutamate desuccinylase (342 aa).

H63, E66, and H155 together coordinate Zn(2+). E219 is a catalytic residue.

This sequence belongs to the AspA/AstE family. Succinylglutamate desuccinylase subfamily. The cofactor is Zn(2+).

The enzyme catalyses N-succinyl-L-glutamate + H2O = L-glutamate + succinate. The protein operates within amino-acid degradation; L-arginine degradation via AST pathway; L-glutamate and succinate from L-arginine: step 5/5. Its function is as follows. Transforms N(2)-succinylglutamate into succinate and glutamate. This is Succinylglutamate desuccinylase from Vibrio campbellii (strain ATCC BAA-1116).